The sequence spans 183 residues: Pyruvoyl-dependent arginine decarboxylase 2 (183 aa).

Position 41 is a pyruvic acid (Ser) (S41).

The protein belongs to the PdaD family. Requires pyruvate as cofactor.

The catalysed reaction is L-arginine + H(+) = agmatine + CO2. The chain is Pyruvoyl-dependent arginine decarboxylase 2 (pdaD2) from Methanosarcina mazei (strain ATCC BAA-159 / DSM 3647 / Goe1 / Go1 / JCM 11833 / OCM 88) (Methanosarcina frisia).